A 355-amino-acid chain; its full sequence is Chorismate synthase (355 aa).

Arg48 contacts NADP(+). Residues 125-127, 239-240, Gly280, 295-299, and Arg321 contribute to the FMN site; these read RSS, NA, and KPVAT.

The protein belongs to the chorismate synthase family. In terms of assembly, homotetramer. Requires FMNH2 as cofactor.

It catalyses the reaction 5-O-(1-carboxyvinyl)-3-phosphoshikimate = chorismate + phosphate. The protein operates within metabolic intermediate biosynthesis; chorismate biosynthesis; chorismate from D-erythrose 4-phosphate and phosphoenolpyruvate: step 7/7. Its function is as follows. Catalyzes the anti-1,4-elimination of the C-3 phosphate and the C-6 proR hydrogen from 5-enolpyruvylshikimate-3-phosphate (EPSP) to yield chorismate, which is the branch point compound that serves as the starting substrate for the three terminal pathways of aromatic amino acid biosynthesis. This reaction introduces a second double bond into the aromatic ring system. The protein is Chorismate synthase of Flavobacterium psychrophilum (strain ATCC 49511 / DSM 21280 / CIP 103535 / JIP02/86).